Here is a 479-residue protein sequence, read N- to C-terminus: Ribosomal RNA small subunit methyltransferase F (479 aa).

S-adenosyl-L-methionine contacts are provided by residues 125–131, E149, D176, and D194; that span reads AAAPGSK. Catalysis depends on C247, which acts as the Nucleophile.

Belongs to the class I-like SAM-binding methyltransferase superfamily. RsmB/NOP family.

Its subcellular location is the cytoplasm. The enzyme catalyses cytidine(1407) in 16S rRNA + S-adenosyl-L-methionine = 5-methylcytidine(1407) in 16S rRNA + S-adenosyl-L-homocysteine + H(+). Its function is as follows. Specifically methylates the cytosine at position 1407 (m5C1407) of 16S rRNA. The polypeptide is Ribosomal RNA small subunit methyltransferase F (Salmonella agona (strain SL483)).